A 603-amino-acid polypeptide reads, in one-letter code: DNA mismatch repair protein MutL (603 aa).

The segment at 361–383 (KETPTLFSKPTIPEYVPSDEDAP) is disordered.

This sequence belongs to the DNA mismatch repair MutL/HexB family.

In terms of biological role, this protein is involved in the repair of mismatches in DNA. It is required for dam-dependent methyl-directed DNA mismatch repair. May act as a 'molecular matchmaker', a protein that promotes the formation of a stable complex between two or more DNA-binding proteins in an ATP-dependent manner without itself being part of a final effector complex. The polypeptide is DNA mismatch repair protein MutL (Listeria monocytogenes serotype 4b (strain CLIP80459)).